Consider the following 95-residue polypeptide: uncharacterized protein (95 aa).

This is an uncharacterized protein from Methanocaldococcus jannaschii (strain ATCC 43067 / DSM 2661 / JAL-1 / JCM 10045 / NBRC 100440) (Methanococcus jannaschii).